Reading from the N-terminus, the 250-residue chain is Triosephosphate isomerase (250 aa).

Residues asparagine 10 and lysine 12 each coordinate substrate. The active-site Electrophile is histidine 94. Residue glutamate 167 is the Proton acceptor of the active site.

Belongs to the triosephosphate isomerase family. In terms of assembly, homodimer.

The protein localises to the cytoplasm. The catalysed reaction is D-glyceraldehyde 3-phosphate = dihydroxyacetone phosphate. It functions in the pathway carbohydrate biosynthesis; gluconeogenesis. The protein operates within carbohydrate degradation; glycolysis; D-glyceraldehyde 3-phosphate from glycerone phosphate: step 1/1. The sequence is that of Triosephosphate isomerase from Taenia solium (Pork tapeworm).